We begin with the raw amino-acid sequence, 227 residues long: NAD(P)H-quinone oxidoreductase subunit K, chloroplastic (227 aa).

[4Fe-4S] cluster contacts are provided by Cys-43, Cys-44, Cys-108, and Cys-139.

This sequence belongs to the complex I 20 kDa subunit family. NDH is composed of at least 16 different subunits, 5 of which are encoded in the nucleus. The cofactor is [4Fe-4S] cluster.

The protein localises to the plastid. Its subcellular location is the chloroplast thylakoid membrane. It carries out the reaction a plastoquinone + NADH + (n+1) H(+)(in) = a plastoquinol + NAD(+) + n H(+)(out). The catalysed reaction is a plastoquinone + NADPH + (n+1) H(+)(in) = a plastoquinol + NADP(+) + n H(+)(out). In terms of biological role, NDH shuttles electrons from NAD(P)H:plastoquinone, via FMN and iron-sulfur (Fe-S) centers, to quinones in the photosynthetic chain and possibly in a chloroplast respiratory chain. The immediate electron acceptor for the enzyme in this species is believed to be plastoquinone. Couples the redox reaction to proton translocation, and thus conserves the redox energy in a proton gradient. The protein is NAD(P)H-quinone oxidoreductase subunit K, chloroplastic of Pelargonium hortorum (Common geranium).